Reading from the N-terminus, the 158-residue chain is MLLLDCNPEVDGLKHLLETGASVNAPPDPCKQSPVHLAAGSGLACFLLWQLQTGADLNQQDVLGEAPLHKAAKVGSLECLSLLVASDAQIDLCNKNGQTAEDLAWSCGFPDCAKFLTTIKCMQTIKASEHPDRNDCVAVLRQKRSLGSVENTSGKRKC.

ANK repeat units follow at residues 1–25 (MLLL…SVNA), 30–59 (CKQS…DLNQ), and 63–92 (LGEA…QIDL). Residues 129 to 149 (EHPDRNDCVAVLRQKRSLGSV) carry the Nuclear localization signal motif.

In terms of processing, ubiquitinated by the CRL2(FEM1B) complex, leading to its degradation. Mainly expressed in testis, small intestine, colon, blood leukocytes and in pancreatic adenocarcinoma cells.

The protein localises to the nucleus. Its subcellular location is the cytoplasm. The protein is Ankyrin repeat domain-containing protein 37 of Homo sapiens (Human).